Reading from the N-terminus, the 81-residue chain is Costars family protein ABRACL (81 aa).

Met1 bears the N-acetylmethionine mark.

Belongs to the costars family.

This Mus musculus (Mouse) protein is Costars family protein ABRACL (Abracl).